A 219-amino-acid chain; its full sequence is Leukocyte surface antigen CD53 (219 aa).

At 1-11 (MGMSSLKLLKY) the chain is on the cytoplasmic side. The chain crosses the membrane as a helical span at residues 12 to 32 (VLFIFNLLFWVCGCCILGFGI). The Extracellular portion of the chain corresponds to 33–54 (YFLVQNTYGVLFRNLPFLTLGN). Residues 55-69 (ILVIVGSIIMVVAFL) traverse the membrane as a helical segment. At 70–80 (GCMGSIKENKC) the chain is on the cytoplasmic side. A helical membrane pass occupies residues 81 to 106 (LLMSFFVLLLIILLAEVTIAILLFVY). Residues 107-181 (EQKLNTLVAE…NKAKSWFHSN (75 aa)) lie on the Extracellular side of the membrane. Residues Asn119, Asn129, and Asn148 are each glycosylated (N-linked (GlcNAc...) asparagine). A helical transmembrane segment spans residues 182–206 (FLYIGIITICVCVIQVLGMSFALTL). Over 207-219 (NCQIDKTSQALGL) the chain is Cytoplasmic.

This sequence belongs to the tetraspanin (TM4SF) family. In terms of assembly, interacts with SCIMP. Interacts with CD45/PTPRC. Interacts with IL7R. Interacts with RBL2 and PPP2CA.

Its subcellular location is the cell membrane. It localises to the cell junction. The protein resides in the membrane. Structural component of specialized membrane microdomains known as tetraspanin-enriched microdomains (TERMs), which act as platforms for receptor clustering and signaling. Participates thereby in diverse biological functions such as cell signal transduction, adhesion, migration and protein trafficking. Plays a role in the activation of monocytes and B-cells. Acts as an essential regulator of B-cell development by promoting interleukin-7 receptor/IL7R signaling. Also promotes, in B-cells, the BCR signaling by recruiting PKC to the plasma membrane in order to phosphorylate its substrates. Plays an essential role in lymphocyte homing to lymph nodes by stabilizing L-selectin/SELL cell surface expression. Also mediates metabolic and inflammatory functions in hepatocytes and adipose tissue by promoting TNF-alpha and LPS signaling independent of the immune compartment. Protects hematopoietic stem cell function in response to stress by facilitating DREAM complex activity through association with p130/RBL2 and its phosphatase PP2A. This is Leukocyte surface antigen CD53 (Cd53) from Mus musculus (Mouse).